Here is a 1442-residue protein sequence, read N- to C-terminus: DNA polymerase III PolC-type (1442 aa).

An Exonuclease domain is found at 409–568 (YVIFDIETTG…YDAIVLADVF (160 aa)).

It belongs to the DNA polymerase type-C family. PolC subfamily.

The protein resides in the cytoplasm. It carries out the reaction DNA(n) + a 2'-deoxyribonucleoside 5'-triphosphate = DNA(n+1) + diphosphate. Functionally, required for replicative DNA synthesis. This DNA polymerase also exhibits 3' to 5' exonuclease activity. The sequence is that of DNA polymerase III PolC-type from Ureaplasma parvum serovar 3 (strain ATCC 700970).